The sequence spans 133 residues: MSWQTYVDDHLMCDIEGTGHHLSSAAILGFDGSVWAQSPNFPKFKAEEITNIMKDFDEPGHLAPTGLFLAGTKYMVIQGEPGAVIRGKKGPGGITIKKTAQALIFGVYEEPVTPGQCNMVVEKIGDYLVDQGY.

Belongs to the profilin family. As to quaternary structure, occurs in many kinds of cells as a complex with monomeric actin in a 1:1 ratio. In terms of tissue distribution, ubiquitous.

The protein localises to the cytoplasm. The protein resides in the cytoskeleton. In terms of biological role, binds to actin and affects the structure of the cytoskeleton. At high concentrations, profilin prevents the polymerization of actin, whereas it enhances it at low concentrations. By binding to PIP2, it inhibits the formation of IP3 and DG. In Solanum lycopersicum (Tomato), this protein is Profilin-1 (PRO1).